Consider the following 218-residue polypeptide: Protease PrsW (218 aa).

Residues 1–23 (MFAIISAGIAPGIALLSYFYLKD) form a helical membrane-spanning segment. Over 24–30 (QYDNEPV) the chain is Cytoplasmic. A helical membrane pass occupies residues 31–53 (HMVLRSFFLGVVLVFPIMFIQYV). At 54 to 98 (LEKENVGGGSFFVSFLSSGFLEESLKWFILMISVYPHAHFDEHYD) the chain is on the extracellular side. The chain crosses the membrane as a helical span at residues 99-121 (GIVYGASVSLGFATLENILYLIG). The Cytoplasmic segment spans residues 122–129 (HGVEHAFV). A helical membrane pass occupies residues 130–151 (RALLPVSCHALIGVIMGFYLGK). Over 152 to 180 (ARFSADKARVKWLTLSLVVPSLLHGSYDF) the chain is Extracellular. The helical transmembrane segment at 181–203 (ILTALSNWIYYMLPFMVFLWWFG) threads the bilayer. The Cytoplasmic segment spans residues 204 to 218 (LRKAKKARSVNMMQV).

Belongs to the protease PrsW family.

The protein localises to the cell membrane. Functionally, involved in the degradation of anti-sigma-W factor RsiW. Responsible for Site-1 cleavage of the RsiW anti-sigma factor. This results, after two other proteolytic steps catalyzed by the RasP and ClpXP proteases, in the release of SigW and the transcription activation of the genes under the control of the sigma-W factor. Seems to be responsible for sensing antimicrobial peptides that damage the cell membrane and other agents that cause cell envelope stress. Therefore it is a protease governing regulated intramembrane proteolysis and resistance to antimicrobial peptides in B.subtilis. The polypeptide is Protease PrsW (Bacillus subtilis (strain 168)).